The sequence spans 144 residues: Transcriptional regulator MraZ (144 aa).

SpoVT-AbrB domains lie at Glu-5 to Arg-47 and Ala-76 to Arg-121.

This sequence belongs to the MraZ family. As to quaternary structure, forms oligomers.

Its subcellular location is the cytoplasm. The protein localises to the nucleoid. This is Transcriptional regulator MraZ from Thermus thermophilus (strain ATCC BAA-163 / DSM 7039 / HB27).